The sequence spans 262 residues: Large ribosomal subunit protein uL10m (262 aa).

The transit peptide at 1 to 28 directs the protein to the mitochondrion; it reads MAAAVAGILRGGLPPRAAWLPTLQTVRH. The segment at 243–262 is disordered; the sequence is GDCATSANEKLHPPDPAPDA.

The protein belongs to the universal ribosomal protein uL10 family. As to quaternary structure, component of the mitochondrial ribosome large subunit (39S) which comprises a 16S rRNA and about 50 distinct proteins.

The protein localises to the mitochondrion. The polypeptide is Large ribosomal subunit protein uL10m (Mrpl10) (Mus musculus (Mouse)).